The chain runs to 144 residues: Large ribosomal subunit protein uL15 (144 aa).

Positions 1 to 52 (MIKLESLQDPSPRKRRKKLLGRGPGSGHGKTSGRGHKGDGSRSGYKRRFGYE) are disordered. Gly residues predominate over residues 22-32 (RGPGSGHGKTS).

The protein belongs to the universal ribosomal protein uL15 family. As to quaternary structure, part of the 50S ribosomal subunit.

Binds to the 23S rRNA. In Chlamydia felis (strain Fe/C-56) (Chlamydophila felis), this protein is Large ribosomal subunit protein uL15.